A 328-amino-acid polypeptide reads, in one-letter code: Malate dehydrogenase (328 aa).

11–17 (GAAGQIG) contacts NAD(+). The substrate site is built by R94 and R100. Residues N107, Q114, and 131 to 133 (VGN) contribute to the NAD(+) site. Positions 133 and 164 each coordinate substrate. H189 (proton acceptor) is an active-site residue.

Belongs to the LDH/MDH superfamily. MDH type 2 family.

The catalysed reaction is (S)-malate + NAD(+) = oxaloacetate + NADH + H(+). Functionally, catalyzes the reversible oxidation of malate to oxaloacetate. The polypeptide is Malate dehydrogenase (Xylella fastidiosa (strain M12)).